The primary structure comprises 198 residues: Inner membrane-spanning protein YciB (198 aa).

5 helical membrane passes run 36–56 (IFSATAMLIISSVVVYGILYI), 67–87 (LTLVACLVFGSLTLAFHSETF), 90–110 (WKAPVVNWLFAVAFAGSHFIG), 133–153 (LNIAWIIFFLFCGAANLYVAF), and 162–182 (FKVFGSLGMTLIFLVGQGIYL).

The protein belongs to the YciB family.

The protein resides in the cell inner membrane. Functionally, plays a role in cell envelope biogenesis, maintenance of cell envelope integrity and membrane homeostasis. The sequence is that of Inner membrane-spanning protein YciB from Pseudomonas syringae pv. tomato (strain ATCC BAA-871 / DC3000).